Reading from the N-terminus, the 193-residue chain is Transcriptional activator GvpE2 (193 aa).

Residue 143–148 (KRKVYR) participates in DNA binding. Positions 153–184 (QAAIEHVDSVVLQLLTFAVGLQTIMADCIVNQ) are leucine-zipper.

In terms of assembly, homodimer. Interacts with endogenous GvpD, also with GvpD from H.mediterranei.

It localises to the cytoplasm. Its activity is regulated as follows. Degraded once GvpD is translated; degradation requires 'Arg-494' of GvpD; tested in transgenic H.volcanii. Fusion of green fluorescent protein to its C-terminus partially protects it from degradation. Plays a regulatory role in gas vesicle synthesis, required to activate transcription of the c-gvpA operon. Gas vesicles are hollow, gas filled proteinaceous nanostructures found in several microbial planktonic microorganisms. They allow positioning of halobacteria at the optimal depth for growth in the poorly aerated, shallow brine pools of their habitat. Functionally, expression of 2 c-vac DNA fragments containing 2 divergently transcribed regions (gvpE-gvpF-gvpG-gvpH-gvpI-gvpJ-gvpK-gvpL-gvpM and gvpA-gvpC-gvpN-gvpO) allows H.volcanii to produce gas vesicles. All site-directed mutagenesis is tested in H.volcanii. The sequence is that of Transcriptional activator GvpE2 from Halobacterium salinarum (strain ATCC 700922 / JCM 11081 / NRC-1) (Halobacterium halobium).